A 457-amino-acid polypeptide reads, in one-letter code: Siroheme synthase (457 aa).

The interval 1-204 is precorrin-2 dehydrogenase /sirohydrochlorin ferrochelatase; it reads MDHLPIFCQL…ADEKAVNATT (204 aa). Residues 22 to 23 and 43 to 44 contribute to the NAD(+) site; these read DV and LT. Phosphoserine is present on serine 128. The uroporphyrinogen-III C-methyltransferase stretch occupies residues 216–457; the sequence is GEVVLVGAGP…RDKLNWFSNH (242 aa). Proline 225 is an S-adenosyl-L-methionine binding site. Catalysis depends on aspartate 248, which acts as the Proton acceptor. Lysine 270 acts as the Proton donor in catalysis. Residues 301–303, isoleucine 306, 331–332, methionine 382, and glycine 411 contribute to the S-adenosyl-L-methionine site; these read GGD and TA.

The protein in the N-terminal section; belongs to the precorrin-2 dehydrogenase / sirohydrochlorin ferrochelatase family. This sequence in the C-terminal section; belongs to the precorrin methyltransferase family.

It catalyses the reaction uroporphyrinogen III + 2 S-adenosyl-L-methionine = precorrin-2 + 2 S-adenosyl-L-homocysteine + H(+). The enzyme catalyses precorrin-2 + NAD(+) = sirohydrochlorin + NADH + 2 H(+). The catalysed reaction is siroheme + 2 H(+) = sirohydrochlorin + Fe(2+). It functions in the pathway cofactor biosynthesis; adenosylcobalamin biosynthesis; precorrin-2 from uroporphyrinogen III: step 1/1. The protein operates within cofactor biosynthesis; adenosylcobalamin biosynthesis; sirohydrochlorin from precorrin-2: step 1/1. Its pathway is porphyrin-containing compound metabolism; siroheme biosynthesis; precorrin-2 from uroporphyrinogen III: step 1/1. It participates in porphyrin-containing compound metabolism; siroheme biosynthesis; siroheme from sirohydrochlorin: step 1/1. It functions in the pathway porphyrin-containing compound metabolism; siroheme biosynthesis; sirohydrochlorin from precorrin-2: step 1/1. Multifunctional enzyme that catalyzes the SAM-dependent methylations of uroporphyrinogen III at position C-2 and C-7 to form precorrin-2 via precorrin-1. Then it catalyzes the NAD-dependent ring dehydrogenation of precorrin-2 to yield sirohydrochlorin. Finally, it catalyzes the ferrochelation of sirohydrochlorin to yield siroheme. In Salmonella typhi, this protein is Siroheme synthase.